Reading from the N-terminus, the 828-residue chain is Leucine--tRNA ligase (828 aa).

Positions 36–46 match the 'HIGH' region motif; the sequence is PYPSGKIHIGH. Positions 595 to 599 match the 'KMSKS' region motif; it reads KMSKS. ATP is bound at residue lysine 598.

The protein belongs to the class-I aminoacyl-tRNA synthetase family.

Its subcellular location is the cytoplasm. It catalyses the reaction tRNA(Leu) + L-leucine + ATP = L-leucyl-tRNA(Leu) + AMP + diphosphate. The sequence is that of Leucine--tRNA ligase from Rickettsia prowazekii (strain Madrid E).